A 652-amino-acid chain; its full sequence is Na(+)/H(+) antiporter NhaA 3 (652 aa).

The segment at 1-428 is na(+)/H(+) antiporter NhaA; that stretch reads MTGEIPRGRR…GASLTTWLVF (428 aa). The next 11 helical transmembrane spans lie at 32 to 52, 78 to 98, 114 to 134, 142 to 162, 173 to 193, 200 to 220, 227 to 249, 306 to 326, 342 to 362, 376 to 396, and 411 to 431; these read ETGS…WVNL, LRFW…GLEV, MLPL…YLAF, VGWG…LAVL, FLLT…AIAY, MALF…AAGV, LLLG…VVGL, HPWA…GVVV, GVLF…SMLV, WAAI…ALLI, and VGIL…FRLA. Residues 429-623 enclose the Thioredoxin domain; sequence RLAARLAPAR…LSAAVMSAFA (195 aa). The interval 626–652 is disordered; sequence RLRPEGGREPDHRSEAGSEQPDEEPGT. The segment covering 627–641 has biased composition (basic and acidic residues); that stretch reads LRPEGGREPDHRSEA.

This sequence in the N-terminal section; belongs to the NhaA Na(+)/H(+) (TC 2.A.33) antiporter family.

Its subcellular location is the cell membrane. The catalysed reaction is Na(+)(in) + 2 H(+)(out) = Na(+)(out) + 2 H(+)(in). In terms of biological role, na(+)/H(+) antiporter that extrudes sodium in exchange for external protons. The polypeptide is Na(+)/H(+) antiporter NhaA 3 (Salinispora tropica (strain ATCC BAA-916 / DSM 44818 / JCM 13857 / NBRC 105044 / CNB-440)).